We begin with the raw amino-acid sequence, 259 residues long: FAD-linked sulfhydryl oxidase (259 aa).

Belongs to the baculoviridae p33 family. In terms of assembly, homodimer.

Its subcellular location is the host cytoplasm. It is found in the host nucleus. The enzyme catalyses 2 R'C(R)SH + O2 = R'C(R)S-S(R)CR' + H2O2. In terms of biological role, functional FAD-linked sulfhydryl oxidase that is required for infectious budded virion (BV) production and for the formation of enveloped occluded virion (ODV). The sequence is that of FAD-linked sulfhydryl oxidase (P33) from Lepidoptera (butterflies and moths).